The following is a 36-amino-acid chain: U14-myrmicitoxin-Tb1a (36 aa).

The N-terminal stretch at 1-23 (MKIIKLITIFTMMATLMXXVANG) is a signal peptide. Residues 24–25 (EP) constitute a propeptide that is removed on maturation. At glutamine 35 the chain carries Glutamine amide.

In terms of tissue distribution, expressed by the venom gland.

Its subcellular location is the secreted. Venom protein with unknown function. Does not induce paralysis when a high dose is administered by intrathoracic injection into the blowfly Lucilia caesar. This chain is U14-myrmicitoxin-Tb1a, found in Tetramorium bicarinatum (Tramp ant).